Here is a 266-residue protein sequence, read N- to C-terminus: Glutamate racemase (266 aa).

Substrate contacts are provided by residues 9-10 and 41-42; these read DS and YG. Catalysis depends on C72, which acts as the Proton donor/acceptor. Residue 73 to 74 coordinates substrate; that stretch reads NT. C183 serves as the catalytic Proton donor/acceptor. Substrate is bound at residue 184–185; that stretch reads TH.

Belongs to the aspartate/glutamate racemases family.

It carries out the reaction L-glutamate = D-glutamate. It functions in the pathway cell wall biogenesis; peptidoglycan biosynthesis. Its function is as follows. Provides the (R)-glutamate required for cell wall biosynthesis. The sequence is that of Glutamate racemase from Listeria monocytogenes serotype 4b (strain CLIP80459).